The chain runs to 121 residues: Large ribosomal subunit protein bL12 (121 aa).

This sequence belongs to the bacterial ribosomal protein bL12 family. As to quaternary structure, homodimer. Part of the ribosomal stalk of the 50S ribosomal subunit. Forms a multimeric L10(L12)X complex, where L10 forms an elongated spine to which 2 to 4 L12 dimers bind in a sequential fashion. Binds GTP-bound translation factors.

In terms of biological role, forms part of the ribosomal stalk which helps the ribosome interact with GTP-bound translation factors. Is thus essential for accurate translation. This Ureaplasma urealyticum serovar 10 (strain ATCC 33699 / Western) protein is Large ribosomal subunit protein bL12.